An 86-amino-acid chain; its full sequence is Cell division topological specificity factor (86 aa).

The protein belongs to the MinE family.

Its function is as follows. Prevents the cell division inhibition by proteins MinC and MinD at internal division sites while permitting inhibition at polar sites. This ensures cell division at the proper site by restricting the formation of a division septum at the midpoint of the long axis of the cell. In Shewanella sediminis (strain HAW-EB3), this protein is Cell division topological specificity factor.